A 256-amino-acid chain; its full sequence is Enkurin (256 aa).

Residues 48-92 (TMGPAKLEVPSPKDFLKKHSKEKTLPPKKKFDRHEPKKPPVPLRT) form a disordered region. Basic and acidic residues predominate over residues 61-72 (DFLKKHSKEKTL). The SH3-binding signature appears at 83 to 89 (PKKPPVP). An Enkurin domain is found at 160 to 252 (KRNEEVKKAQ…VLEKHKIIYI (93 aa)). The 12-residue stretch at 176–187 (IQENLRKAAMKR) folds into the IQ domain.

As to quaternary structure, microtubule inner protein component of sperm flagellar doublet microtubules. Binds calmodulin via its IQ domain. Interacts with TRPC1, TRPC2, TRPC5, but not TRPC3. Interacts with CFAP45.

The protein localises to the cytoplasm. Its subcellular location is the cytoskeleton. It localises to the cilium axoneme. It is found in the flagellum axoneme. Functionally, adapter that functions to localize a calcium-sensitive signal transduction machinery in sperm to a calcium-permeable ion channel. Microtubule inner protein (MIP) part of the dynein-decorated doublet microtubules (DMTs) in cilia axoneme, which is required for motile cilia beating. The sequence is that of Enkurin (ENKUR) from Sus scrofa (Pig).